A 304-amino-acid polypeptide reads, in one-letter code: Putative S-adenosyl-L-methionine-dependent methyltransferase MAV_1058 (304 aa).

Residues aspartate 128 and 157–158 (DL) contribute to the S-adenosyl-L-methionine site.

The protein belongs to the UPF0677 family.

Exhibits S-adenosyl-L-methionine-dependent methyltransferase activity. This chain is Putative S-adenosyl-L-methionine-dependent methyltransferase MAV_1058, found in Mycobacterium avium (strain 104).